Reading from the N-terminus, the 51-residue chain is Insulin (51 aa).

Intrachain disulfides connect cysteine 7-cysteine 37, cysteine 19-cysteine 50, and cysteine 36-cysteine 41.

This sequence belongs to the insulin family. As to quaternary structure, heterodimer of a B chain and an A chain linked by two disulfide bonds.

The protein resides in the secreted. Its function is as follows. Insulin decreases blood glucose concentration. It increases cell permeability to monosaccharides, amino acids and fatty acids. It accelerates glycolysis, the pentose phosphate cycle, and glycogen synthesis in liver. The sequence is that of Insulin (INS) from Balaenoptera borealis (Sei whale).